The chain runs to 367 residues: MAYSTVQRVALASGLVLAVSLLLPKAFLSRGKRPEPPPGPEGKLDRFPPMMHHHSAPSDGQTPGARFQRSHLAEAFAKAKGAGGGAGGGGSGRGLMGQIIPIYGFGIFLYILYILFKLSKGKTAEDRNCSTAPPGNAHRKITNFELVQLQEKLKETEEAMEKLINRVGPNGESRAQAVTSDQEKRLLHQLREITRVMKEGKFIDTSPEKEAEEAPYMEDWEGYPEETYPIYDLSDGIKRRQETILVDYPDLKEPSAEEIAEQMGEIEEEGSERLSWDHLPTDPGAQKDNSVAPCDPKPESCSCCVHEEEDPAVLAENAGFSADGYSEQEEATKENLPQDFTNEGLGVSTDNAHVGGMLRKRNPQGFE.

An N-terminal signal peptide occupies residues 1 to 31 (MAYSTVQRVALASGLVLAVSLLLPKAFLSRG). A disordered region spans residues 30–67 (RGKRPEPPPGPEGKLDRFPPMMHHHSAPSDGQTPGARF). Residues 32-95 (KRPEPPPGPE…AGGGGSGRGL (64 aa)) are Lumenal-facing. A helical transmembrane segment spans residues 96-116 (MGQIIPIYGFGIFLYILYILF). The Cytoplasmic segment spans residues 117-367 (KLSKGKTAED…LRKRNPQGFE (251 aa)). A coiled-coil region spans residues 138-169 (HRKITNFELVQLQEKLKETEEAMEKLINRVGP). Lys-201 carries the N6-acetyllysine; alternate modification. Residue Lys-201 forms a Glycyl lysine isopeptide (Lys-Gly) (interchain with G-Cter in ubiquitin); alternate linkage. 2 disordered regions span residues 262-301 (QMGE…PESC) and 322-367 (ADGY…QGFE). The span at 271 to 280 (SERLSWDHLP) shows a compositional bias: basic and acidic residues. Over residues 358–367 (LRKRNPQGFE) the composition is skewed to basic residues.

This sequence belongs to the ric-3 family. Monomer and homodimer. Interacts with CHRNA7, CHRNA3, CHRNA4, CHRNB2, CHRNB4 and HTR3A. In terms of tissue distribution, expressed in brain, with highest levels in hippocampus, cerebellum and superior colliculus.

It localises to the endoplasmic reticulum membrane. Functionally, molecular chaperone which promotes the proper subunit assembly and surface trafficking of alpha-7 (CHRNA7) nicotinic acetylcholine receptor. Promotes the proper subunit assembly and cell surface expression of alpha-8 (CHRNA8) nicotinic acetylcholine receptor. May also promote functional expression of homomeric serotoninergic 5-HT3 receptors, and of heteromeric acetylcholine receptors alpha-3/beta-2, alpha-3/beta-4, alpha-4/beta-2 and alpha-4/beta-4. This is Protein RIC-3 (Ric3) from Mus musculus (Mouse).